The primary structure comprises 473 residues: 3-isopropylmalate dehydratase large subunit (473 aa).

Positions 354, 414, and 417 each coordinate [4Fe-4S] cluster.

It belongs to the aconitase/IPM isomerase family. LeuC type 1 subfamily. Heterodimer of LeuC and LeuD. [4Fe-4S] cluster serves as cofactor.

The catalysed reaction is (2R,3S)-3-isopropylmalate = (2S)-2-isopropylmalate. Its pathway is amino-acid biosynthesis; L-leucine biosynthesis; L-leucine from 3-methyl-2-oxobutanoate: step 2/4. Its function is as follows. Catalyzes the isomerization between 2-isopropylmalate and 3-isopropylmalate, via the formation of 2-isopropylmaleate. This chain is 3-isopropylmalate dehydratase large subunit, found in Mycobacterium marinum (strain ATCC BAA-535 / M).